The following is a 650-amino-acid chain: Threonine--tRNA ligase, chloroplastic/mitochondrial 2 (650 aa).

Zn(2+) contacts are provided by cysteine 347, histidine 398, and histidine 524.

This sequence belongs to the class-II aminoacyl-tRNA synthetase family.

The protein resides in the plastid. It is found in the chloroplast. The protein localises to the mitochondrion. It carries out the reaction tRNA(Thr) + L-threonine + ATP = L-threonyl-tRNA(Thr) + AMP + diphosphate + H(+). The polypeptide is Threonine--tRNA ligase, chloroplastic/mitochondrial 2 (Arabidopsis thaliana (Mouse-ear cress)).